The following is a 536-amino-acid chain: Glutamate--tRNA ligase, mitochondrial (536 aa).

Residue 48 to 50 coordinates L-glutamate; the sequence is RFA. The 'HIGH' region motif lies at 53-61; that stretch reads PTGFLHLGS. His58 is an ATP binding site. Residues Glu84, 235-239, and Arg253 each bind L-glutamate; that span reads YHLAN. ATP-binding positions include Glu256 and 291–295; that span reads KLSKR. A 'KMSKS' region motif is present at residues 291–295; it reads KLSKR.

It belongs to the class-I aminoacyl-tRNA synthetase family. Glutamate--tRNA ligase type 1 subfamily.

It localises to the mitochondrion matrix. The enzyme catalyses tRNA(Glu) + L-glutamate + ATP = L-glutamyl-tRNA(Glu) + AMP + diphosphate. Catalyzes the attachment of glutamate to tRNA(Glu) in a two-step reaction: glutamate is first activated by ATP to form Glu-AMP and then transferred to the acceptor end of tRNA(Glu). This chain is Glutamate--tRNA ligase, mitochondrial (MSE1), found in Saccharomyces cerevisiae (strain ATCC 204508 / S288c) (Baker's yeast).